Here is a 587-residue protein sequence, read N- to C-terminus: Phosphatidylinositol-3-phosphatase SAC1 (587 aa).

At methionine 1–lysine 520 the chain is on the cytoplasmic side. One can recognise an SAC domain in the interval leucine 122–glycine 451. The essential for phosphatidylinositol-4-phosphate phosphatase activity stretch occupies residues threonine 452–aspartate 587. Lysine 456 is subject to N6-acetyllysine. Residues phenylalanine 521–methionine 541 traverse the membrane as a helical segment. The Lumenal segment spans residues alanine 542–glutamate 548. The chain crosses the membrane as a helical span at residues threonine 549–tyrosine 569. At asparagine 570 to aspartate 587 the chain is on the cytoplasmic side.

As to quaternary structure, interacts with TMEM39A. Interacts with SEC23A and SEC24A; this interaction is reduced in the absence of TMEM39A. Interacts with PLEKHA3 and VAPA and/or VAPB to form a ternary complex. Detected in spleen, lung, liver, skeletal muscle, kidney, testis and in cerebellar Purkinje cells (at protein level). Ubiquitous. Highly expressed in brain, spleen, liver and kidney.

The protein localises to the endoplasmic reticulum membrane. The protein resides in the golgi apparatus membrane. It carries out the reaction a 1,2-diacyl-sn-glycero-3-phospho-(1D-myo-inositol-3-phosphate) + H2O = a 1,2-diacyl-sn-glycero-3-phospho-(1D-myo-inositol) + phosphate. The catalysed reaction is a 1,2-diacyl-sn-glycero-3-phospho-(1D-myo-inositol 4-phosphate) + H2O = a 1,2-diacyl-sn-glycero-3-phospho-(1D-myo-inositol) + phosphate. Functionally, phosphoinositide phosphatase which catalyzes the hydrolysis of phosphatidylinositol 4-phosphate (PtdIns(4)P), phosphatidylinositol 3-phosphate (PtdIns(3)P) and has low activity towards phosphatidylinositol-3,5-bisphosphate (PtdIns(3,5)P2). Shows a very robust PtdIns(4)P phosphatase activity when it binds PtdIns(4)P in a 'cis' configuration in the cellular environment, with much less activity seen when it binds PtdIns(4)P in 'trans' configuration. PtdIns(4)P phosphatase activity (when it binds PtdIns(4)P in 'trans' configuration) is enhanced in the presence of PLEKHA3. This chain is Phosphatidylinositol-3-phosphatase SAC1 (Sacm1l), found in Rattus norvegicus (Rat).